The primary structure comprises 578 residues: Potassium-transporting ATPase potassium-binding subunit (578 aa).

10 helical membrane passes run 3–23 (NAILQYSLYLIILVLLAIPLG), 65–85 (SFSVLAFSAVGFIFLFALNLL), 134–154 (GLTVQNFLSAGVGIAVLFALI), 175–195 (IVLYLLVPLSIVLSILLVSQG), 261–281 (FSNLLEMLSILLIPAALCFTF), 293–313 (AIFIAMFTLLIIALCIIGVSE), 397–417 (GLYGMIAFAIITVFIAGLMVG), 435–455 (AMLICLATPISILIGSALASI), 503–523 (IGLIMLFVRFVPMIATLAIAG), and 543–563 (LLFIGLLIFVVLLVGALSFFP).

This sequence belongs to the KdpA family. In terms of assembly, the system is composed of three essential subunits: KdpA, KdpB and KdpC.

It localises to the cell membrane. Part of the high-affinity ATP-driven potassium transport (or Kdp) system, which catalyzes the hydrolysis of ATP coupled with the electrogenic transport of potassium into the cytoplasm. This subunit binds the extracellular potassium ions and delivers the ions to the membrane domain of KdpB through an intramembrane tunnel. In Clostridium perfringens (strain ATCC 13124 / DSM 756 / JCM 1290 / NCIMB 6125 / NCTC 8237 / Type A), this protein is Potassium-transporting ATPase potassium-binding subunit.